Reading from the N-terminus, the 276-residue chain is 4-deoxy-L-threo-5-hexosulose-uronate ketol-isomerase (276 aa).

Positions 194, 196, 201, and 243 each coordinate Zn(2+).

The protein belongs to the KduI family. It depends on Zn(2+) as a cofactor.

The catalysed reaction is 5-dehydro-4-deoxy-D-glucuronate = 3-deoxy-D-glycero-2,5-hexodiulosonate. Its pathway is glycan metabolism; pectin degradation; 2-dehydro-3-deoxy-D-gluconate from pectin: step 4/5. Catalyzes the isomerization of 5-dehydro-4-deoxy-D-glucuronate to 3-deoxy-D-glycero-2,5-hexodiulosonate. The sequence is that of 4-deoxy-L-threo-5-hexosulose-uronate ketol-isomerase from Lachnoclostridium phytofermentans (strain ATCC 700394 / DSM 18823 / ISDg) (Clostridium phytofermentans).